The primary structure comprises 192 residues: Protein GrpE (192 aa).

This sequence belongs to the GrpE family. In terms of assembly, homodimer.

The protein localises to the cytoplasm. Its function is as follows. Participates actively in the response to hyperosmotic and heat shock by preventing the aggregation of stress-denatured proteins, in association with DnaK and GrpE. It is the nucleotide exchange factor for DnaK and may function as a thermosensor. Unfolded proteins bind initially to DnaJ; upon interaction with the DnaJ-bound protein, DnaK hydrolyzes its bound ATP, resulting in the formation of a stable complex. GrpE releases ADP from DnaK; ATP binding to DnaK triggers the release of the substrate protein, thus completing the reaction cycle. Several rounds of ATP-dependent interactions between DnaJ, DnaK and GrpE are required for fully efficient folding. This chain is Protein GrpE, found in Neisseria gonorrhoeae (strain NCCP11945).